A 574-amino-acid polypeptide reads, in one-letter code: MSYRAGDAARRARERYELKQAAAEFYRKLSVTERLEEALNSTFCLGPEDVYGHLANYFAQFSKPPTICQIRGRKVLDGTGEPTVEAEVFCTVKNMDKRICSSVISAASEHPKASKGPEQESNHSADIAIQWLNDLSPKLRGMSPDEQNKIDQLLSDFYQPKIEEEKERRQMEREASPMPLQPEPSPVTSPAPGKKKGSGKGKKAAVVEKPIPPEETPEAVVPGSPAIGALSLAVAKASSVLSKTPLYLHIRALRNEKLPTEFFMPTPMISILSCGTSSPGKLNLMKEVLIIPQTGLTVQQSLDMALMLQNQIVKQINAASKTGPAIKNVSPLGCMLIGGDRIEQPLDLICEACQHVGLELGTNLYLAINCAAHELMDYNKGKYEVLSGTFKSPDEMIDLYVDLINRQPAILALLDPLRKEDTVQWESLAKALGSKCYLFADAASKPVCKLLESGSMNSPPCSGTVIKHTNEITISQLLGVFKLIEGENRVAVLGCPYKESVGDSTADLAVGLGARFVKLGGLLRGERTTKYNRLLAIEDELTQAGALGFWTKNEFPVLCEVQNQPGPQETPETQ.

Residues 165–175 (EKERRQMEREA) are compositionally biased toward basic and acidic residues. Residues 165–221 (EKERRQMEREASPMPLQPEPSPVTSPAPGKKKGSGKGKKAAVVEKPIPPEETPEAVV) form a disordered region. Residues 179–189 (PLQPEPSPVTS) are compositionally biased toward pro residues. Over residues 193–203 (GKKKGSGKGKK) the composition is skewed to basic residues. Glu-287 lines the substrate pocket. Catalysis depends on Lys-467, which acts as the Proton acceptor. Residue Lys-518 participates in substrate binding.

Belongs to the enolase family.

The catalysed reaction is (2R)-2-phosphoglycerate = phosphoenolpyruvate + H2O. The protein operates within carbohydrate degradation; glycolysis; pyruvate from D-glyceraldehyde 3-phosphate: step 4/5. In Xenopus tropicalis (Western clawed frog), this protein is Enolase 4 (eno4).